Consider the following 428-residue polypeptide: Glutamate--tRNA ligase 2 (428 aa).

Positions 6–16 (PSPTGDMRTEQ) match the 'HIGH' region motif.

Belongs to the class-I aminoacyl-tRNA synthetase family. Glutamate--tRNA ligase type 1 subfamily. In terms of assembly, monomer.

It is found in the cytoplasm. The catalysed reaction is tRNA(Glu) + L-glutamate + ATP = L-glutamyl-tRNA(Glu) + AMP + diphosphate. Its function is as follows. Catalyzes the attachment of glutamate to tRNA(Glu) in a two-step reaction: glutamate is first activated by ATP to form Glu-AMP and then transferred to the acceptor end of tRNA(Glu). In Sulfurovum sp. (strain NBC37-1), this protein is Glutamate--tRNA ligase 2.